Reading from the N-terminus, the 600-residue chain is NADH-ubiquinone oxidoreductase chain 5 (600 aa).

16 consecutive transmembrane segments (helical) span residues 1 to 21 (MYIL…LFGR), 27 to 47 (GAGI…LLIF), 81 to 101 (LTAV…IFST), 110 to 130 (VPRF…LVTS), 136 to 156 (LFIG…FWLT), 178 to 198 (FVLA…ASVF), 200 to 220 (IVAL…FIGA), 241 to 261 (TPVS…FLLI), 274 to 294 (LMVV…IGLV), 301 to 323 (VIAY…SQYS), 327 to 347 (FHLM…GSVI), 366 to 386 (IPFT…FPYL), 404 to 424 (YLAF…AYSL), 450 to 470 (WNLT…GYLT), 488 to 508 (SIKL…VVLY), and 520 to 540 (SPVG…NYII).

Belongs to the complex I subunit 5 family.

It localises to the mitochondrion inner membrane. The enzyme catalyses a ubiquinone + NADH + 5 H(+)(in) = a ubiquinol + NAD(+) + 4 H(+)(out). Functionally, core subunit of the mitochondrial membrane respiratory chain NADH dehydrogenase (Complex I) that is believed to belong to the minimal assembly required for catalysis. Complex I functions in the transfer of electrons from NADH to the respiratory chain. The immediate electron acceptor for the enzyme is believed to be ubiquinone. The protein is NADH-ubiquinone oxidoreductase chain 5 (ND5) of Metridium senile (Brown sea anemone).